A 297-amino-acid polypeptide reads, in one-letter code: 2-dehydropantoate 2-reductase (297 aa).

NADP(+) contacts are provided by residues 11–16, N107, and A133; that span reads GAGAMG. N107 serves as a coordination point for substrate. The active-site Proton donor is the K187. Positions 191, 195, 205, and 251 each coordinate substrate. E263 contributes to the NADP(+) binding site.

Belongs to the ketopantoate reductase family.

The protein localises to the cytoplasm. The catalysed reaction is (R)-pantoate + NADP(+) = 2-dehydropantoate + NADPH + H(+). The protein operates within cofactor biosynthesis; (R)-pantothenate biosynthesis; (R)-pantoate from 3-methyl-2-oxobutanoate: step 2/2. Catalyzes the NADPH-dependent reduction of ketopantoate into pantoic acid. The chain is 2-dehydropantoate 2-reductase from Listeria monocytogenes serovar 1/2a (strain ATCC BAA-679 / EGD-e).